We begin with the raw amino-acid sequence, 509 residues long: Steroid 17-alpha-hydroxylase/17,20 lyase (509 aa).

Residue Asn-202 participates in substrate binding. Residue Cys-442 participates in heme binding.

It belongs to the cytochrome P450 family. Heme serves as cofactor.

Its subcellular location is the endoplasmic reticulum membrane. It localises to the microsome membrane. The enzyme catalyses a C21-steroid + reduced [NADPH--hemoprotein reductase] + O2 = a 17alpha-hydroxy-C21-steroid + oxidized [NADPH--hemoprotein reductase] + H2O + H(+). It carries out the reaction progesterone + reduced [NADPH--hemoprotein reductase] + O2 = 17alpha-hydroxyprogesterone + oxidized [NADPH--hemoprotein reductase] + H2O + H(+). The catalysed reaction is pregnenolone + reduced [NADPH--hemoprotein reductase] + O2 = 17alpha-hydroxypregnenolone + oxidized [NADPH--hemoprotein reductase] + H2O + H(+). It catalyses the reaction 17alpha-hydroxyprogesterone + reduced [NADPH--hemoprotein reductase] + O2 = androst-4-ene-3,17-dione + acetate + oxidized [NADPH--hemoprotein reductase] + H2O + 2 H(+). The enzyme catalyses 17alpha-hydroxyprogesterone + reduced [NADPH--hemoprotein reductase] + O2 = 16alpha,17alpha-dihydroxyprogesterone + oxidized [NADPH--hemoprotein reductase] + H2O + H(+). It carries out the reaction 16alpha,17alpha-dihydroxyprogesterone + reduced [NADPH--hemoprotein reductase] + O2 = 6beta,16alpha,17alpha-trihydroxyprogesterone + oxidized [NADPH--hemoprotein reductase] + H2O + H(+). The catalysed reaction is 17alpha-hydroxypregnenolone + reduced [NADPH--hemoprotein reductase] + O2 = 3beta-hydroxyandrost-5-en-17-one + acetate + oxidized [NADPH--hemoprotein reductase] + H2O + 2 H(+). It catalyses the reaction 16alpha,17alpha-dihydroxypregnenolone + reduced [NADPH--hemoprotein reductase] + O2 = 3beta,16alpha-dihydroxy-androst-5-en-17-one + acetate + oxidized [NADPH--hemoprotein reductase] + H2O + 2 H(+). The enzyme catalyses 3beta-hydroxyandrost-5-en-17-one + reduced [NADPH--hemoprotein reductase] + O2 = 3beta,16alpha-dihydroxy-androst-5-en-17-one + oxidized [NADPH--hemoprotein reductase] + H2O + H(+). It carries out the reaction androst-4-ene-3,17-dione + reduced [NADPH--hemoprotein reductase] + O2 = 16alpha-hydroxyandrost-4-ene-3,17-dione + oxidized [NADPH--hemoprotein reductase] + H2O + H(+). It participates in steroid hormone biosynthesis. Its pathway is steroid biosynthesis; glucocorticoid biosynthesis. Its activity is regulated as follows. Regulated predominantly by intracellular cAMP levels. The 17,20-lyase activity is stimulated by cytochrome b5, which acts as an allosteric effector increasing the Vmax of the lyase activity. Functionally, a cytochrome P450 monooxygenase involved in corticoid and androgen biosynthesis. Catalyzes 17-alpha hydroxylation of C21 steroids, which is common for both pathways. A second oxidative step, required only for androgen synthesis, involves an acyl-carbon cleavage. The 17-alpha hydroxy intermediates, as part of adrenal glucocorticoids biosynthesis pathway, are precursors of cortisol. Hydroxylates steroid hormones, pregnenolone and progesterone to form 17-alpha hydroxy metabolites, followed by the cleavage of the C17-C20 bond to form C19 steroids, dehydroepiandrosterone (DHEA) and androstenedione. Has 16-alpha hydroxylase activity. Catalyzes 16-alpha hydroxylation of 17-alpha hydroxy pregnenolone, followed by the cleavage of the C17-C20 bond to form 16-alpha-hydroxy DHEA. Also 16-alpha hydroxylates androgens, relevant for estriol synthesis. Mechanistically, uses molecular oxygen inserting one oxygen atom into a substrate, and reducing the second into a water molecule, with two electrons provided by NADPH via cytochrome P450 reductase (CPR; NADPH-ferrihemoprotein reductase). This chain is Steroid 17-alpha-hydroxylase/17,20 lyase (CYP17A1), found in Capra hircus (Goat).